Here is a 637-residue protein sequence, read N- to C-terminus: Serine/threonine protein kinase ypkA (637 aa).

Positions 20 to 29 (TFTRSSSTST) are enriched in low complexity. Disordered stretches follow at residues 20–63 (TFTR…SLVS) and 104–140 (SSSV…INAA). Polar residues predominate over residues 40–61 (VVSQTPSISSTNSNGINASESL). Residues 104–116 (SSSVRPSSSSSHS) show a composition bias toward low complexity. Residues 117 to 136 (THGQTASFAQSGRPQSTSGG) show a composition bias toward polar residues. Positions 294–551 (FDLLKVVGKG…AAEIKSHHFF (258 aa)) constitute a Protein kinase domain. ATP contacts are provided by residues 300 to 308 (VGKGSFGKV) and K323. D417 (proton acceptor) is an active-site residue. In terms of domain architecture, AGC-kinase C-terminal spans 552-623 (ANIDWRKLLQ…NRPVAGLGDA (72 aa)). 2 positions are modified to phosphoserine: S593 and S612. At Y613 the chain carries Phosphotyrosine.

Belongs to the protein kinase superfamily. Ser/Thr protein kinase family. Interacts with the sakA MAP kinase.

It carries out the reaction L-seryl-[protein] + ATP = O-phospho-L-seryl-[protein] + ADP + H(+). The enzyme catalyses L-threonyl-[protein] + ATP = O-phospho-L-threonyl-[protein] + ADP + H(+). Its function is as follows. Serine/threonine protein kinase required for vegetative growth and conidiation. Important for fungal survival through the regulation of glycosphingolipid (GSL) biosynthesis and cross talks with MAP kinase pathways such as the cell wall integrity (CWI) and the high osmolarity glycerol (HOG) pathways. The polypeptide is Serine/threonine protein kinase ypkA (Aspergillus fumigatus (strain ATCC MYA-4609 / CBS 101355 / FGSC A1100 / Af293) (Neosartorya fumigata)).